The sequence spans 491 residues: Cytochrome P450 2B9 (491 aa).

Ser-128 is subject to Phosphoserine; by PKA. A heme-binding site is contributed by Cys-436.

It belongs to the cytochrome P450 family. The cofactor is heme.

It localises to the endoplasmic reticulum membrane. The protein resides in the microsome membrane. The enzyme catalyses an organic molecule + reduced [NADPH--hemoprotein reductase] + O2 = an alcohol + oxidized [NADPH--hemoprotein reductase] + H2O + H(+). Its function is as follows. Cytochromes P450 are a group of heme-thiolate monooxygenases. In liver microsomes, this enzyme is involved in an NADPH-dependent electron transport pathway. It oxidizes a variety of structurally unrelated compounds, including steroids, fatty acids, and xenobiotics. The chain is Cytochrome P450 2B9 (Cyp2b9) from Mus musculus (Mouse).